The chain runs to 144 residues: Austinoid biosynthesis clusters protein S (144 aa).

It belongs to the trt14 isomerase family. As to quaternary structure, homodimer.

It functions in the pathway secondary metabolite biosynthesis; terpenoid biosynthesis. Its function is as follows. Part of the gene cluster B that mediates the biosynthesis of the fungal meroterpenoid acetoxydehydroaustin. The first step of the pathway is the synthesis of 3,5-dimethylorsellinic acid by the polyketide synthase ausA. 3,5-dimethylorsellinic acid is then prenylated by the polyprenyl transferase ausN. Further epoxidation by the FAD-dependent monooxygenase ausM and cyclization by the probable terpene cyclase ausL lead to the formation of protoaustinoid A. Protoaustinoid A is then oxidized to spiro-lactone preaustinoid A3 by the combined action of the FAD-binding monooxygenases ausB and ausC, and the dioxygenase ausE. Acid-catalyzed keto-rearrangement and ring contraction of the tetraketide portion of preaustinoid A3 by ausJ lead to the formation of preaustinoid A4. The aldo-keto reductase ausK, with the help of ausH, is involved in the next step by transforming preaustinoid A4 into isoaustinone which is in turn hydroxylated by the P450 monooxygenase ausI to form austinolide. The cytochrome P450 monooxygenase ausG then modifies austinolide to austinol. Austinol is further acetylated to austin by the O-acetyltransferase ausP, which spontaneously changes to dehydroaustin. The cytochrome P450 monooxygenase then converts dehydroaustin is into 7-dehydrodehydroaustin. The hydroxylation catalyzed by ausR permits the second O-acetyltransferase ausQ to add an additional acetyl group to the molecule, leading to the formation of acetoxydehydroaustin. Due to genetic rearrangements of the clusters and the subsequent loss of some enzymes, the end product of the Penicillium brasilianum austinoid biosynthesis clusters is acetoxydehydroaustin. AusS is necessary for austinoids production and may play a possible function as a regulator. In Penicillium brasilianum, this protein is Austinoid biosynthesis clusters protein S.